Reading from the N-terminus, the 69-residue chain is Light-harvesting protein B-1015 alpha chain (69 aa).

Topologically, residues 2-20 (ATEYRTASWKLWLILDPRR) are cytoplasmic. The helical transmembrane segment at 21–41 (VLTALFVYLTVIALLIHFGLL) threads the bilayer. H37 contacts a bacteriochlorophyll. Over 42-59 (STDRLNWWEFQRGLPKAA) the chain is Periplasmic. Residues 60–69 (SLVVVPPAVG) constitute a propeptide that is removed on maturation.

It belongs to the antenna complex alpha subunit family. In terms of assembly, the core complex is formed by different alpha and beta chains, binding bacteriochlorophyll molecules, and arranged most probably in tetrameric structures disposed around the reaction center. The non-pigmented gamma chains may constitute additional components.

It is found in the cell inner membrane. Antenna complexes are light-harvesting systems, which transfer the excitation energy to the reaction centers. The chain is Light-harvesting protein B-1015 alpha chain (pufA) from Blastochloris viridis (Rhodopseudomonas viridis).